The following is a 498-amino-acid chain: Calcium-dependent protein kinase 22 (498 aa).

Gly-2 carries N-myristoyl glycine lipidation. A Protein kinase domain is found at 36–305 (YSFGDELGKG…AADVLEHPWM (270 aa)). ATP-binding positions include 42 to 50 (LGKGNFGTT) and Lys-65. The Proton acceptor role is filled by Asp-164. Ser-204 is subject to Phosphoserine. The tract at residues 309–339 (APDKPIDNVVLSRMKQFRAMNKLKKLALKVI) is autoinhibitory domain. 4 EF-hand domains span residues 346–381 (EEIK…HGSK), 382–417 (LSET…RHRL), 418–453 (ERDE…HGMG), and 454–488 (DEAN…GILQ). Positions 359, 361, 363, 365, 370, 395, 397, 399, 401, 406, 431, 433, 435, 437, 442, 466, 468, 470, 472, and 477 each coordinate Ca(2+).

The protein belongs to the protein kinase superfamily. Ser/Thr protein kinase family. CDPK subfamily.

The protein localises to the membrane. It catalyses the reaction L-seryl-[protein] + ATP = O-phospho-L-seryl-[protein] + ADP + H(+). It carries out the reaction L-threonyl-[protein] + ATP = O-phospho-L-threonyl-[protein] + ADP + H(+). With respect to regulation, activated by calcium. Autophosphorylation may play an important role in the regulation of the kinase activity. Its function is as follows. May play a role in signal transduction pathways that involve calcium as a second messenger. In Arabidopsis thaliana (Mouse-ear cress), this protein is Calcium-dependent protein kinase 22 (CPK22).